Consider the following 223-residue polypeptide: Ion-translocating oxidoreductase complex subunit E (223 aa).

Helical transmembrane passes span 17–37 (NGVL…GTAT), 40–60 (LGMG…VAMF), 70–90 (IPVY…GMNA), 94–114 (ELYK…LPLA), 129–149 (FLDG…IGAV), and 182–202 (WGIL…LMVV).

The protein belongs to the NqrDE/RnfAE family. The complex is composed of six subunits: RnfA, RnfB, RnfC, RnfD, RnfE and RnfG.

The protein localises to the cell inner membrane. Functionally, part of a membrane-bound complex that couples electron transfer with translocation of ions across the membrane. This Paramagnetospirillum magneticum (strain ATCC 700264 / AMB-1) (Magnetospirillum magneticum) protein is Ion-translocating oxidoreductase complex subunit E.